The primary structure comprises 338 residues: Nicotinate-nucleotide--dimethylbenzimidazole phosphoribosyltransferase (338 aa).

The active-site Proton acceptor is Glu-305.

This sequence belongs to the CobT family.

The enzyme catalyses 5,6-dimethylbenzimidazole + nicotinate beta-D-ribonucleotide = alpha-ribazole 5'-phosphate + nicotinate + H(+). It participates in nucleoside biosynthesis; alpha-ribazole biosynthesis; alpha-ribazole from 5,6-dimethylbenzimidazole: step 1/2. Its function is as follows. Catalyzes the synthesis of alpha-ribazole-5'-phosphate from nicotinate mononucleotide (NAMN) and 5,6-dimethylbenzimidazole (DMB). The sequence is that of Nicotinate-nucleotide--dimethylbenzimidazole phosphoribosyltransferase from Rhizobium leguminosarum bv. trifolii (strain WSM2304).